The sequence spans 442 residues: Lipoyl synthase, apicoplast (442 aa).

A signal peptide spans 1–25 (MHVLTPSLYIYAFFIVCVRLKCGRS). Residues 92–154 (LLRSESATDE…EKKPDWFHVP (63 aa)) are disordered. A compositionally biased stretch (basic and acidic residues) spans 109-127 (LKEKLKESPANWGKDKQEE). Positions 177, 182, 188, 203, 207, 210, and 418 each coordinate [4Fe-4S] cluster. Residues 189-407 (WNIGTATIML…KEEGMKMGFK (219 aa)) form the Radical SAM core domain.

It belongs to the radical SAM superfamily. Lipoyl synthase family. [4Fe-4S] cluster is required as a cofactor.

It localises to the plastid. The protein resides in the apicoplast. The enzyme catalyses [[Fe-S] cluster scaffold protein carrying a second [4Fe-4S](2+) cluster] + N(6)-octanoyl-L-lysyl-[protein] + 2 oxidized [2Fe-2S]-[ferredoxin] + 2 S-adenosyl-L-methionine + 4 H(+) = [[Fe-S] cluster scaffold protein] + N(6)-[(R)-dihydrolipoyl]-L-lysyl-[protein] + 4 Fe(3+) + 2 hydrogen sulfide + 2 5'-deoxyadenosine + 2 L-methionine + 2 reduced [2Fe-2S]-[ferredoxin]. It participates in protein modification; protein lipoylation via endogenous pathway; protein N(6)-(lipoyl)lysine from octanoyl-[acyl-carrier-protein]: step 2/2. Its function is as follows. Catalyzes the radical-mediated insertion of two sulfur atoms into the C-6 and C-8 positions of the octanoyl moiety bound to the lipoyl domains of lipoate-dependent enzymes, thereby converting the octanoylated domains into lipoylated derivatives. This chain is Lipoyl synthase, apicoplast, found in Plasmodium vivax (strain Salvador I).